The primary structure comprises 375 residues: 23S rRNA (uracil(747)-C(5))-methyltransferase RlmC (375 aa).

[4Fe-4S] cluster is bound by residues C3, C11, C14, and C87. Positions 212, 241, 262, and 307 each coordinate S-adenosyl-L-methionine. C334 acts as the Nucleophile in catalysis.

The protein belongs to the class I-like SAM-binding methyltransferase superfamily. RNA M5U methyltransferase family. RlmC subfamily.

It carries out the reaction uridine(747) in 23S rRNA + S-adenosyl-L-methionine = 5-methyluridine(747) in 23S rRNA + S-adenosyl-L-homocysteine + H(+). Functionally, catalyzes the formation of 5-methyl-uridine at position 747 (m5U747) in 23S rRNA. The protein is 23S rRNA (uracil(747)-C(5))-methyltransferase RlmC of Shigella boydii serotype 18 (strain CDC 3083-94 / BS512).